The following is a 171-amino-acid chain: Large ribosomal subunit protein uL10 (171 aa).

Belongs to the universal ribosomal protein uL10 family. In terms of assembly, part of the ribosomal stalk of the 50S ribosomal subunit. The N-terminus interacts with L11 and the large rRNA to form the base of the stalk. The C-terminus forms an elongated spine to which L12 dimers bind in a sequential fashion forming a multimeric L10(L12)X complex.

In terms of biological role, forms part of the ribosomal stalk, playing a central role in the interaction of the ribosome with GTP-bound translation factors. The protein is Large ribosomal subunit protein uL10 of Corynebacterium efficiens (strain DSM 44549 / YS-314 / AJ 12310 / JCM 11189 / NBRC 100395).